A 149-amino-acid polypeptide reads, in one-letter code: Ribosomal RNA large subunit methyltransferase H (149 aa).

Residues L71, G98, and 117–122 (LSKLTL) each bind S-adenosyl-L-methionine.

Belongs to the RNA methyltransferase RlmH family. In terms of assembly, homodimer.

Its subcellular location is the cytoplasm. The enzyme catalyses pseudouridine(1915) in 23S rRNA + S-adenosyl-L-methionine = N(3)-methylpseudouridine(1915) in 23S rRNA + S-adenosyl-L-homocysteine + H(+). Its function is as follows. Specifically methylates the pseudouridine at position 1915 (m3Psi1915) in 23S rRNA. This is Ribosomal RNA large subunit methyltransferase H from Campylobacter jejuni subsp. doylei (strain ATCC BAA-1458 / RM4099 / 269.97).